Consider the following 302-residue polypeptide: uncharacterized protein (302 aa).

The 72-residue stretch at 19–90 (QWLFSVLKTA…GELDILFEDN (72 aa)) folds into the S4 RNA-binding domain. The active site involves Asp138. The segment at 182–205 (KGTINSPIGRDRSHPTRRRVSPGG) is disordered.

Belongs to the pseudouridine synthase RluA family.

It catalyses the reaction a uridine in RNA = a pseudouridine in RNA. This is an uncharacterized protein from Bacillus subtilis (strain 168).